The primary structure comprises 130 residues: Small ribosomal subunit protein uS9 (130 aa).

This sequence belongs to the universal ribosomal protein uS9 family.

This is Small ribosomal subunit protein uS9 from Pseudomonas fluorescens (strain ATCC BAA-477 / NRRL B-23932 / Pf-5).